A 294-amino-acid chain; its full sequence is 4-hydroxy-tetrahydrodipicolinate synthase (294 aa).

A pyruvate-binding site is contributed by T45. Residue Y133 is the Proton donor/acceptor of the active site. The active-site Schiff-base intermediate with substrate is the K161. I203 contributes to the pyruvate binding site.

This sequence belongs to the DapA family. As to quaternary structure, homotetramer; dimer of dimers.

It is found in the cytoplasm. The catalysed reaction is L-aspartate 4-semialdehyde + pyruvate = (2S,4S)-4-hydroxy-2,3,4,5-tetrahydrodipicolinate + H2O + H(+). It functions in the pathway amino-acid biosynthesis; L-lysine biosynthesis via DAP pathway; (S)-tetrahydrodipicolinate from L-aspartate: step 3/4. Functionally, catalyzes the condensation of (S)-aspartate-beta-semialdehyde [(S)-ASA] and pyruvate to 4-hydroxy-tetrahydrodipicolinate (HTPA). The protein is 4-hydroxy-tetrahydrodipicolinate synthase of Shewanella baltica (strain OS223).